Here is a 217-residue protein sequence, read N- to C-terminus: Oxygen regulatory protein NreC (217 aa).

In terms of domain architecture, Response regulatory spans Lys2–Tyr119. 4-aspartylphosphate is present on Asp53. The 66-residue stretch at Thr148–Lys213 folds into the HTH luxR-type domain. Residues Asn172 to Thr191 constitute a DNA-binding region (H-T-H motif).

Phosphorylated by NreB.

The protein resides in the cytoplasm. Its function is as follows. Member of the two-component regulatory system NreB/NreC involved in the control of dissimilatory nitrate/nitrite reduction in response to oxygen. Phosphorylated NreC binds to a GC-rich palindromic sequence at the promoters of the nitrate (narGHJI) and nitrite (nir) reductase operons, as well as the putative nitrate transporter gene narT, and activates their expression. In Staphylococcus aureus (strain USA300 / TCH1516), this protein is Oxygen regulatory protein NreC (nreC).